Reading from the N-terminus, the 608-residue chain is Ceramide kinase (608 aa).

Positions 160–367 constitute a DAGKc domain; the sequence is ERPRNLLVFV…LDAMQVVRWK (208 aa). ATP-binding positions include 170 to 174, T201, and 230 to 236; these read HPKSG and GDGFFNE. Substrate is bound at residue 229–232; the sequence is GGDG. Catalysis depends on D231, which acts as the Proton donor/acceptor. The tract at residues 254 to 280 is disordered; the sequence is PSDSFNSVQSRGSSSVPEPGDEVHETD. Positions 255-269 are enriched in polar residues; that stretch reads SDSFNSVQSRGSSSV. Position 329 (S329) interacts with ATP.

It depends on Ca(2+) as a cofactor.

It catalyses the reaction an N-acylsphing-4-enine + ATP = an N-acylsphing-4-enine 1-phosphate + ADP + H(+). In terms of biological role, catalyzes specifically the phosphorylation of ceramide to form ceramide 1-phosphate. Possesses high activity on ceramide analogs (C6, C8 synthetic ceramides) and lower activity on C6 and C8 dihydroceramides. Has weak activity on natural ceramides (a mixture of ceramides from bovine brain) and the synthetic substrate C2 ceramide. Has very poor activity on diacylglycerol and sphingosine. Ceramide is a critical sphingolipid metabolite that induces programmed cell death (PCD) in plants and ceramide-1-phosphate has a PCD suppressive effect. Thus, ceramide phosphorylation plays a role in the modulation of PCD and CERK activity is crucial for the maintenance of cell viability. The polypeptide is Ceramide kinase (CERK) (Arabidopsis thaliana (Mouse-ear cress)).